Reading from the N-terminus, the 309-residue chain is Gamma-hemolysin component A (309 aa).

The first 29 residues, Met-1 to Ala-29, serve as a signal peptide directing secretion.

It belongs to the aerolysin family. As to quaternary structure, toxicity requires sequential binding and synergistic association of a class S and a class F component which form heterooligomeric complexes. HlgA (class S) associates with HlgB (class F) thus forming an AB toxin in strains producing both gamma-hemolysins and leukocidins. HlgA and LukF-PV can also form a complex.

It localises to the secreted. In terms of biological role, toxin that seems to act by forming pores in the membrane of the cell. Has a hemolytic and a leucotoxic activity. This chain is Gamma-hemolysin component A (hlgA), found in Staphylococcus aureus (strain COL).